Here is a 429-residue protein sequence, read N- to C-terminus: 3-phosphoshikimate 1-carboxyvinyltransferase (429 aa).

The 3-phosphoshikimate site is built by Lys11, Ser12, and Arg16. Lys11 lines the phosphoenolpyruvate pocket. The phosphoenolpyruvate site is built by Gly82 and Arg110. 3-phosphoshikimate-binding residues include Ser155, Gln157, Asp302, and Lys329. Gln157 is a binding site for phosphoenolpyruvate. Asp302 serves as the catalytic Proton acceptor. Arg333 and Arg385 together coordinate phosphoenolpyruvate.

It belongs to the EPSP synthase family. As to quaternary structure, monomer.

Its subcellular location is the cytoplasm. The catalysed reaction is 3-phosphoshikimate + phosphoenolpyruvate = 5-O-(1-carboxyvinyl)-3-phosphoshikimate + phosphate. It participates in metabolic intermediate biosynthesis; chorismate biosynthesis; chorismate from D-erythrose 4-phosphate and phosphoenolpyruvate: step 6/7. Its function is as follows. Catalyzes the transfer of the enolpyruvyl moiety of phosphoenolpyruvate (PEP) to the 5-hydroxyl of shikimate-3-phosphate (S3P) to produce enolpyruvyl shikimate-3-phosphate and inorganic phosphate. The chain is 3-phosphoshikimate 1-carboxyvinyltransferase from Helicobacter pylori (strain Shi470).